The following is a 661-amino-acid chain: FAST kinase domain-containing protein 3, mitochondrial (661 aa).

Positions 592–650 (VALCIDGPQRFCLDSKHLLGKEATKQRHLRLLGYQVVQLPYHELELLTSRLELVDYLQR) constitute an RAP domain.

This sequence belongs to the FAST kinase family. In terms of tissue distribution, expression detected in spleen, testis, colon, heart, smooth muscle, kidney, brain, lung, liver, brown and white adipose tissue with highest expression in testis and smooth muscle.

Its subcellular location is the mitochondrion. Required for normal mitochondrial respiration. Increases steady-state levels and half-lives of a subset of mature mitochondrial mRNAs MT-ND2, MT-ND3, MT-CYTB, MT-CO2, and MT-ATP8/6. Promotes MT-CO1 mRNA translation and increases mitochondrial complex IV assembly and activity. The chain is FAST kinase domain-containing protein 3, mitochondrial (Fastkd3) from Mus musculus (Mouse).